The sequence spans 156 residues: ATP synthase subunit b (156 aa).

Residues 13 to 33 form a helical membrane-spanning segment; sequence AFIIFVWFCMKFVWPPLMNAI.

Belongs to the ATPase B chain family. F-type ATPases have 2 components, F(1) - the catalytic core - and F(0) - the membrane proton channel. F(1) has five subunits: alpha(3), beta(3), gamma(1), delta(1), epsilon(1). F(0) has three main subunits: a(1), b(2) and c(10-14). The alpha and beta chains form an alternating ring which encloses part of the gamma chain. F(1) is attached to F(0) by a central stalk formed by the gamma and epsilon chains, while a peripheral stalk is formed by the delta and b chains.

The protein resides in the cell inner membrane. In terms of biological role, f(1)F(0) ATP synthase produces ATP from ADP in the presence of a proton or sodium gradient. F-type ATPases consist of two structural domains, F(1) containing the extramembraneous catalytic core and F(0) containing the membrane proton channel, linked together by a central stalk and a peripheral stalk. During catalysis, ATP synthesis in the catalytic domain of F(1) is coupled via a rotary mechanism of the central stalk subunits to proton translocation. Its function is as follows. Component of the F(0) channel, it forms part of the peripheral stalk, linking F(1) to F(0). The protein is ATP synthase subunit b of Shewanella woodyi (strain ATCC 51908 / MS32).